Reading from the N-terminus, the 258-residue chain is Short-chain dehydrogenase/reductase olcF (258 aa).

Residues Val-12, Asp-58, and Arg-120 each contribute to the NADP(+) site. Ser-138 acts as the Proton donor in catalysis. Residues Tyr-152, Lys-156, and Val-185 each coordinate NADP(+). The active-site Proton acceptor is the Tyr-152. Catalysis depends on Lys-156, which acts as the Lowers pKa of active site Tyr.

The protein belongs to the short-chain dehydrogenases/reductases (SDR) family.

Its pathway is secondary metabolite biosynthesis; terpenoid biosynthesis. Its function is as follows. Short-chain dehydrogenase/reductase; part of the gene cluster that mediates the biosynthesis of 15-deoxyoxalicine B. The first step of the pathway is the synthesis of nicotinyl-CoA from nicotinic acid by the nicotinic acid-CoA ligase olcI. Nicotinyl-CoA is then a substrate of polyketide synthase olcA to produce 4-hydroxy-6-(3-pyridinyl)-2H-pyran-2-one (HPPO) which is further prenylated by the polyprenyl transferase olcH to yield geranylgeranyl-HPPO. Geranylgeranyl pyrophosphate is provided by the cluster-specific geranylgeranyl pyrophosphate synthase olcC. The FAD-dependent monooxygenase olcE catalyzes the epoxidation of geranylgeranyl-HPPO and the terpene cyclase olcD catalyzes the cyclization of the terpenoid component, resulting in the formation of the tricyclic terpene moiety seen in predecaturin E. The cytochrome P450 monooxygenase then catalyzes the allylic oxidation of predecaturin E, which is followed by spirocylization with concomitant loss of one molecule of water to form decaturin E. Decaturin E is the substrate of the cytochrome P450 monooxygenase olcJ which hydroxylates it at the C-29 position to form decaturin F. The short-chain dehydrogenase/reductase olcF may catalyze the oxidation of decaturin F to generate the 29-hydroxyl-27-one intermediate, and subsequent hemiacetal formation probably leads to the formation of decaturin C. The dioxygenase olcK may be a peroxisomal enzyme that catalyzes the hydroxylation of decaturin C into decaturin A once decaturin C is shuttled into the peroxisome by the MFS transporter olcL. Finally the cytochrome P450 monooxygenase olcB catalyzes the oxidative rearrangement to yield 15-deoxyoxalicine B. In the absence of olcJ, decaturin E may be shunted to a pathway in which it is oxidized to a ketone, possibly by olcF, to form decaturin D, which undergoes further allylic oxidation to yield decaturin G. Moreover, in the absence of oclK or oclL, oclB can convert decaturin C into 15-deoxyoxalicine A. This Penicillium canescens protein is Short-chain dehydrogenase/reductase olcF.